A 354-amino-acid chain; its full sequence is NADH-quinone oxidoreductase subunit H (354 aa).

The next 8 membrane-spanning stretches (helical) occupy residues L25–W45, W91–I111, L126–A146, M170–V190, F205–I225, I267–F287, F290–W310, and I330–L350.

The protein belongs to the complex I subunit 1 family. In terms of assembly, NDH-1 is composed of 14 different subunits. Subunits NuoA, H, J, K, L, M, N constitute the membrane sector of the complex.

It localises to the cell inner membrane. The catalysed reaction is a quinone + NADH + 5 H(+)(in) = a quinol + NAD(+) + 4 H(+)(out). In terms of biological role, NDH-1 shuttles electrons from NADH, via FMN and iron-sulfur (Fe-S) centers, to quinones in the respiratory chain. The immediate electron acceptor for the enzyme in this species is believed to be ubiquinone. Couples the redox reaction to proton translocation (for every two electrons transferred, four hydrogen ions are translocated across the cytoplasmic membrane), and thus conserves the redox energy in a proton gradient. This subunit may bind ubiquinone. This chain is NADH-quinone oxidoreductase subunit H, found in Paraburkholderia phytofirmans (strain DSM 17436 / LMG 22146 / PsJN) (Burkholderia phytofirmans).